The primary structure comprises 873 residues: Cyanophycin synthetase (873 aa).

The region spanning 224 to 480 (KTILQDAGIP…VAAPVLDMLF (257 aa)) is the ATP-grasp domain. 495–501 (GTNGKTT) contacts ATP.

This sequence in the C-terminal section; belongs to the MurCDEF family. Homodimer.

The catalysed reaction is [L-4-(L-arginin-2-N-yl)aspartate](n) + L-aspartate + ATP = [L-4-(L-arginin-2-N-yl)aspartate](n)-L-aspartate + ADP + phosphate + H(+). It carries out the reaction [L-4-(L-arginin-2-N-yl)aspartate](n)-L-aspartate + L-arginine + ATP = [L-4-(L-arginin-2-N-yl)aspartate](n+1) + ADP + phosphate + H(+). Functionally, catalyzes the ATP-dependent polymerization of arginine and aspartate to multi-L-arginyl-poly-L-aspartic acid (cyanophycin; a water-insoluble reserve polymer). The sequence is that of Cyanophycin synthetase (cphA) from Synechocystis sp. (strain ATCC 27184 / PCC 6803 / Kazusa).